A 158-amino-acid chain; its full sequence is Transcription elongation factor GreA (158 aa).

The stretch at 1–67 (MSNNIPLTKE…FIEGRIQELQ (67 aa)) forms a coiled coil.

It belongs to the GreA/GreB family.

Functionally, necessary for efficient RNA polymerase transcription elongation past template-encoded arresting sites. The arresting sites in DNA have the property of trapping a certain fraction of elongating RNA polymerases that pass through, resulting in locked ternary complexes. Cleavage of the nascent transcript by cleavage factors such as GreA or GreB allows the resumption of elongation from the new 3'terminus. GreA releases sequences of 2 to 3 nucleotides. In Trichlorobacter lovleyi (strain ATCC BAA-1151 / DSM 17278 / SZ) (Geobacter lovleyi), this protein is Transcription elongation factor GreA.